Reading from the N-terminus, the 120-residue chain is Large ribosomal subunit protein uL24 (120 aa).

It belongs to the universal ribosomal protein uL24 family. In terms of assembly, part of the 50S ribosomal subunit.

Functionally, one of two assembly initiator proteins, it binds directly to the 5'-end of the 23S rRNA, where it nucleates assembly of the 50S subunit. In terms of biological role, one of the proteins that surrounds the polypeptide exit tunnel on the outside of the subunit. The sequence is that of Large ribosomal subunit protein uL24 from Pseudarthrobacter chlorophenolicus (strain ATCC 700700 / DSM 12829 / CIP 107037 / JCM 12360 / KCTC 9906 / NCIMB 13794 / A6) (Arthrobacter chlorophenolicus).